The primary structure comprises 275 residues: Beta-lactamase OXA-15 (275 aa).

The N-terminal stretch at 1 to 21 (MAIRIFAILFSIFSLATFAHA) is a signal peptide. The active-site Acyl-ester intermediate is serine 72. At lysine 75 the chain carries N6-carboxylysine. 210–212 (KTG) contacts substrate.

This sequence belongs to the class-D beta-lactamase family.

The catalysed reaction is a beta-lactam + H2O = a substituted beta-amino acid. In terms of biological role, hydrolyzes oxacillin, first-generation cephalosporins and ceftazidime. Does not hydrolyze cefotaxime or carbapenems. This chain is Beta-lactamase OXA-15 (bla), found in Pseudomonas aeruginosa.